We begin with the raw amino-acid sequence, 111 residues long: uncharacterized protein (111 aa).

4 consecutive transmembrane segments (helical) span residues 3 to 23 (WVLV…LKHA), 24 to 44 (DSLL…ILLI), 54 to 74 (AAYT…GIVL), and 80 to 100 (AAQM…KLFT).

Belongs to the drug/metabolite transporter (DMT) superfamily. Small multidrug resistance (SMR) (TC 2.A.7.1) family.

It localises to the cell membrane. This is an uncharacterized protein from Bacillus subtilis (strain 168).